The chain runs to 249 residues: Large ribosomal subunit protein uL4 (249 aa).

The protein belongs to the universal ribosomal protein uL4 family. In terms of assembly, part of the 50S ribosomal subunit.

Its function is as follows. One of the primary rRNA binding proteins, this protein initially binds near the 5'-end of the 23S rRNA. It is important during the early stages of 50S assembly. It makes multiple contacts with different domains of the 23S rRNA in the assembled 50S subunit and ribosome. In terms of biological role, forms part of the polypeptide exit tunnel. This is Large ribosomal subunit protein uL4 from Methanoculleus marisnigri (strain ATCC 35101 / DSM 1498 / JR1).